Consider the following 347-residue polypeptide: Ribosomal RNA small subunit methyltransferase C (347 aa).

The protein belongs to the methyltransferase superfamily. RsmC family. Monomer.

The protein localises to the cytoplasm. It catalyses the reaction guanosine(1207) in 16S rRNA + S-adenosyl-L-methionine = N(2)-methylguanosine(1207) in 16S rRNA + S-adenosyl-L-homocysteine + H(+). Its function is as follows. Specifically methylates the guanine in position 1207 of 16S rRNA in the 30S particle. In Shewanella baltica (strain OS185), this protein is Ribosomal RNA small subunit methyltransferase C.